The sequence spans 75 residues: MDSKYLFVFLIFNVIVIDLCQGFLWGLIPGAISAVTSLIKKGRRRRELGSQYDYLQDFRKRELDLDDLLSKFPDY.

The N-terminal stretch at 1-22 is a signal peptide; it reads MDSKYLFVFLIFNVIVIDLCQG. Lysine amide is present on Lys-41. Residues 47–75 constitute a propeptide that is removed on maturation; it reads ELGSQYDYLQDFRKRELDLDDLLSKFPDY.

Belongs to the non-disulfide-bridged peptide (NDBP) superfamily. Short antimicrobial peptide (group 4) family. As to expression, expressed by the venom gland.

It localises to the secreted. Its subcellular location is the target cell membrane. In terms of biological role, antimicrobial peptide that acts by breaking the cell wall. Is active against Gram-positive bacteria, fungi and antibiotic-resistant pathogens: S.aureus (MIC=5 ug/ml), M.luteus (MIC=5 ug/ml), B.thuringiensis (MIC=10 ug/ml), B.subtilis (MIC=10 ug/ml), C.albicans (MIC=20 ug/ml), methicillin-resistant S.aureus (MIC=5-10 ug/ml), and penicillin-resistant S.epidermidis (MIC=10 ug/ml). Also shows potent activity against antibiotic-sensitive and -resistant Acinetobacter baumannii (MIC=10-20 uM). Shows cytolytic activity against human erythrocytes. In vivo, is efficient in curing staphylococcal skin infection in mice, when externally applied. In Chaerilus tricostatus (Scorpion), this protein is Antimicrobial peptide ctriporin.